The primary structure comprises 344 residues: Acetylpolyamine amidohydrolase 2 (344 aa).

His159 serves as the catalytic Proton donor/acceptor. Residues Asp195, His197, and Asp284 each coordinate Zn(2+).

It belongs to the histone deacetylase family. As to quaternary structure, homodimer. Requires Zn(2+) as cofactor.

It catalyses the reaction N-acetylputrescine + H2O = putrescine + acetate. The catalysed reaction is N-acetylcadaverine + H2O = cadaverine + acetate. The protein operates within amine and polyamine metabolism. Catalyzes the deacetylation of acetylated polyamines such as N-acetylputrescine and N-acetylcadaverine. Plays an important role in the metabolism of acetylated polyamines in P.aeruginosa. Is involved in the degradation pathways of N-acetylputrescine and N-acetylcadaverine, that allow P.aeruginosa to utilize these acetylpolyamines as a carbon source under glucose starvation. Shows nearly no activity against N(1)-acetylspermine and N(1)-acetylspermidine. Can also hydrolyze artificial trifluoroacetylated lysine-derivative, and to a lesser extent, acetylated lysine-derivative. This Pseudomonas aeruginosa (strain ATCC 15692 / DSM 22644 / CIP 104116 / JCM 14847 / LMG 12228 / 1C / PRS 101 / PAO1) protein is Acetylpolyamine amidohydrolase 2.